The primary structure comprises 367 residues: Flagellar P-ring protein (367 aa).

A signal peptide spans 1 to 22 (MRRMLVIRWILAIHLIATQVFA).

It belongs to the FlgI family. The basal body constitutes a major portion of the flagellar organelle and consists of four rings (L,P,S, and M) mounted on a central rod.

The protein resides in the periplasm. It is found in the bacterial flagellum basal body. Functionally, assembles around the rod to form the L-ring and probably protects the motor/basal body from shearing forces during rotation. In Legionella pneumophila subsp. pneumophila (strain Philadelphia 1 / ATCC 33152 / DSM 7513), this protein is Flagellar P-ring protein.